A 574-amino-acid polypeptide reads, in one-letter code: Proline--tRNA ligase (574 aa).

The protein belongs to the class-II aminoacyl-tRNA synthetase family. ProS type 1 subfamily. As to quaternary structure, homodimer.

Its subcellular location is the cytoplasm. The catalysed reaction is tRNA(Pro) + L-proline + ATP = L-prolyl-tRNA(Pro) + AMP + diphosphate. In terms of biological role, catalyzes the attachment of proline to tRNA(Pro) in a two-step reaction: proline is first activated by ATP to form Pro-AMP and then transferred to the acceptor end of tRNA(Pro). As ProRS can inadvertently accommodate and process non-cognate amino acids such as alanine and cysteine, to avoid such errors it has two additional distinct editing activities against alanine. One activity is designated as 'pretransfer' editing and involves the tRNA(Pro)-independent hydrolysis of activated Ala-AMP. The other activity is designated 'posttransfer' editing and involves deacylation of mischarged Ala-tRNA(Pro). The misacylated Cys-tRNA(Pro) is not edited by ProRS. This chain is Proline--tRNA ligase, found in Fervidobacterium nodosum (strain ATCC 35602 / DSM 5306 / Rt17-B1).